The primary structure comprises 216 residues: Small ribosomal subunit protein uS5 (216 aa).

The tract at residues 1–55 (MDRKLENQKDLLNQDPKVELNSQSVAKNPLNSREVKPIQRRRPLRKNSRDKNSKP) is disordered. Residues 20–31 (LNSQSVAKNPLN) are compositionally biased toward polar residues. Residues 57-120 (FEERVIAIHR…KDAQNRLVSV (64 aa)) form the S5 DRBM domain.

The protein belongs to the universal ribosomal protein uS5 family. In terms of assembly, part of the 30S ribosomal subunit. Contacts proteins S4 and S8.

With S4 and S12 plays an important role in translational accuracy. In terms of biological role, located at the back of the 30S subunit body where it stabilizes the conformation of the head with respect to the body. This Mesomycoplasma hyopneumoniae (strain J / ATCC 25934 / NCTC 10110) (Mycoplasma hyopneumoniae) protein is Small ribosomal subunit protein uS5.